We begin with the raw amino-acid sequence, 176 residues long: Putative metal-dependent hydrolase BLi00869/BLi00870/BL03027 (176 aa).

The Zn(2+) site is built by H65, H158, and H162.

Belongs to the metal hydrolase YfiT family. Homodimer. The cofactor is Zn(2+).

Its subcellular location is the cytoplasm. Functionally, possible metal-dependent hydrolase. In Bacillus licheniformis (strain ATCC 14580 / DSM 13 / JCM 2505 / CCUG 7422 / NBRC 12200 / NCIMB 9375 / NCTC 10341 / NRRL NRS-1264 / Gibson 46), this protein is Putative metal-dependent hydrolase BLi00869/BLi00870/BL03027.